A 308-amino-acid polypeptide reads, in one-letter code: D-alanine--D-alanine ligase (308 aa).

In terms of domain architecture, ATP-grasp spans 100–295 (KEVFVRNGLP…FDGLIGRLIE (196 aa)). 127–180 (PFAFPAFIKSNNGGSSLALHRVSCPGELARALDELFTRGGEAIIEPAVEGVEVT) provides a ligand contact to ATP. The Mg(2+) site is built by aspartate 249, glutamate 262, and asparagine 264.

This sequence belongs to the D-alanine--D-alanine ligase family. Mg(2+) is required as a cofactor. Requires Mn(2+) as cofactor.

Its subcellular location is the cytoplasm. It carries out the reaction 2 D-alanine + ATP = D-alanyl-D-alanine + ADP + phosphate + H(+). It functions in the pathway cell wall biogenesis; peptidoglycan biosynthesis. Functionally, cell wall formation. This Oleidesulfovibrio alaskensis (strain ATCC BAA-1058 / DSM 17464 / G20) (Desulfovibrio alaskensis) protein is D-alanine--D-alanine ligase.